The sequence spans 61 residues: uncharacterized protein (61 aa).

The N-terminal stretch at Met1–Ala28 is a signal peptide.

This is an uncharacterized protein from Mycobacterium tuberculosis (strain ATCC 25618 / H37Rv).